The chain runs to 87 residues: Small ribosomal subunit protein uS17 (87 aa).

It belongs to the universal ribosomal protein uS17 family. In terms of assembly, part of the 30S ribosomal subunit.

One of the primary rRNA binding proteins, it binds specifically to the 5'-end of 16S ribosomal RNA. This Staphylococcus aureus (strain Mu3 / ATCC 700698) protein is Small ribosomal subunit protein uS17.